Reading from the N-terminus, the 360-residue chain is Peptide chain release factor 1 (360 aa).

Residue Gln235 is modified to N5-methylglutamine. The span at 284–293 (ARRQQEESST) shows a compositional bias: basic and acidic residues. The disordered stretch occupies residues 284-314 (ARRQQEESSTRRNLLGSGDRSDRNRTYNFPQ).

This sequence belongs to the prokaryotic/mitochondrial release factor family. Post-translationally, methylated by PrmC. Methylation increases the termination efficiency of RF1.

It localises to the cytoplasm. Its function is as follows. Peptide chain release factor 1 directs the termination of translation in response to the peptide chain termination codons UAG and UAA. The sequence is that of Peptide chain release factor 1 from Erwinia tasmaniensis (strain DSM 17950 / CFBP 7177 / CIP 109463 / NCPPB 4357 / Et1/99).